Here is a 156-residue protein sequence, read N- to C-terminus: Arginine repressor (156 aa).

Belongs to the ArgR family.

The protein localises to the cytoplasm. It participates in amino-acid biosynthesis; L-arginine biosynthesis [regulation]. Regulates arginine biosynthesis genes. In Vibrio cholerae serotype O1 (strain ATCC 39315 / El Tor Inaba N16961), this protein is Arginine repressor.